The sequence spans 148 residues: Large ribosomal subunit protein bL9 (148 aa).

The protein belongs to the bacterial ribosomal protein bL9 family.

In terms of biological role, binds to the 23S rRNA. The chain is Large ribosomal subunit protein bL9 from Aeromonas salmonicida (strain A449).